Reading from the N-terminus, the 212-residue chain is Small ribosomal subunit protein uS5 (212 aa).

Positions 48 to 111 (LDDEVLDINM…EVAKLNIIDV (64 aa)) constitute an S5 DRBM domain.

It belongs to the universal ribosomal protein uS5 family. Part of the 30S ribosomal subunit. Contacts protein S4.

In terms of biological role, with S4 and S12 plays an important role in translational accuracy. The polypeptide is Small ribosomal subunit protein uS5 (Halobacterium salinarum (strain ATCC 700922 / JCM 11081 / NRC-1) (Halobacterium halobium)).